A 109-amino-acid polypeptide reads, in one-letter code: Putative double-stranded DNA mimic protein plu2488 (109 aa).

It belongs to the putative dsDNA mimic protein family.

Its function is as follows. May act as a double-stranded DNA (dsDNA) mimic. Probably regulates the activity of a dsDNA-binding protein. The sequence is that of Putative double-stranded DNA mimic protein plu2488 from Photorhabdus laumondii subsp. laumondii (strain DSM 15139 / CIP 105565 / TT01) (Photorhabdus luminescens subsp. laumondii).